Consider the following 517-residue polypeptide: N-acetylglucosamine-1-phosphodiester alpha-N-acetylglucosaminidase (517 aa).

An N-terminal signal peptide occupies residues 1 to 25; it reads MAAPRGPGLFLIPALLGLLGVAWCS. The propeptide at 26 to 49 is removed in mature form; that stretch reads LSFGVSRDDDLLLPYPLARRRPSR. The tract at residues 49 to 75 is disordered; the sequence is RDCARVRSGSPEQESWPPPPTNPGASH. The Lumenal segment spans residues 50–453; that stretch reads DCARVRSGSP…ASFTRTTWLA (404 aa). 5 disulfide bridges follow: Cys-116–Cys-149, Cys-133–Cys-324, Cys-308–Cys-315, Cys-363–Cys-374, and Cys-381–Cys-390. N-linked (GlcNAc...) asparagine glycans are attached at residues Asn-215 and Asn-297. The EGF-like domain maps to 359 to 391; it reads SELDCGPSNCSQHGLCTETGCHCDAGWTGSNCS. N-linked (GlcNAc...) asparagine glycans are attached at residues Asn-367, Asn-389, and Asn-421. The helical transmembrane segment at 454–474 threads the bilayer; it reads LTLTLIFLLLISTGVNVSLFL. Residues 475–517 lie on the Cytoplasmic side of the membrane; it reads GSRAERNRHLDGDYVYHPLQEVNGEALTAEKEHMEETSNPFKD. Positions 488–491 match the Tyrosine-based internalization motif motif; sequence YVYH. The interval 488-495 is mediates the interaction with AP4M1; that stretch reads YVYHPLQE. The short motif at 511 to 515 is the NPF internalization motif element; the sequence is TSNPF.

As to quaternary structure, homotetramer arranged as two disulfide-linked homodimers. Interacts with AP4M1. Post-translationally, the precursor is cleaved and activated in the trans-Golgi network by a furin endopeptidase.

It localises to the golgi apparatus. The protein resides in the golgi stack membrane. It is found in the trans-Golgi network. It catalyses the reaction N(4)-[6-(N-acetyl-alpha-D-glucosaminyl-1-phospho)-alpha-D-mannosyl-(1-&gt;2)-alpha-D-mannosyl-(glycan)]-L-asparaginyl-[protein] + H2O = N(4)-[6-phospho-alpha-D-mannosyl-(1-&gt;2)-alpha-D-mannosyl-(glycan)]-L-asparaginyl-[protein] + N-acetyl-D-glucosamine + H(+). It functions in the pathway protein modification; protein glycosylation. Functionally, catalyzes the second step in the formation of the mannose 6-phosphate targeting signal on lysosomal enzyme oligosaccharides by removing GlcNAc residues from GlcNAc-alpha-P-mannose moieties, which are formed in the first step. Also hydrolyzes UDP-GlcNAc, a sugar donor for Golgi N-acetylglucosaminyltransferases. The chain is N-acetylglucosamine-1-phosphodiester alpha-N-acetylglucosaminidase (Nagpa) from Mus musculus (Mouse).